Reading from the N-terminus, the 58-residue chain is Light-harvesting protein B-870 alpha chain (58 aa).

Topologically, residues 1 to 15 are cytoplasmic; the sequence is MSKFYKIWLVFDPRR. The chain crosses the membrane as a helical span at residues 16–36; it reads VFVAQGVFLFLLAVLIHLILL. An a bacteriochlorophyll-binding site is contributed by histidine 32. Residues 37–58 are Periplasmic-facing; it reads STPAFNWLTVATAKHGYVAAAQ.

The protein belongs to the antenna complex alpha subunit family. The core complex is formed by different alpha and beta chains, binding bacteriochlorophyll molecules, and arranged most probably in tetrameric structures disposed around the reaction center. The non-pigmented gamma chains may constitute additional components.

Its subcellular location is the cell inner membrane. In terms of biological role, antenna complexes are light-harvesting systems, which transfer the excitation energy to the reaction centers. In Rhodobacter capsulatus (Rhodopseudomonas capsulata), this protein is Light-harvesting protein B-870 alpha chain (pufA).